Consider the following 243-residue polypeptide: Ubiquinone/menaquinone biosynthesis C-methyltransferase UbiE (243 aa).

S-adenosyl-L-methionine contacts are provided by residues threonine 69, aspartate 90, and 116-117 (DA).

The protein belongs to the class I-like SAM-binding methyltransferase superfamily. MenG/UbiE family.

It catalyses the reaction a 2-demethylmenaquinol + S-adenosyl-L-methionine = a menaquinol + S-adenosyl-L-homocysteine + H(+). The catalysed reaction is a 2-methoxy-6-(all-trans-polyprenyl)benzene-1,4-diol + S-adenosyl-L-methionine = a 5-methoxy-2-methyl-3-(all-trans-polyprenyl)benzene-1,4-diol + S-adenosyl-L-homocysteine + H(+). The protein operates within quinol/quinone metabolism; menaquinone biosynthesis; menaquinol from 1,4-dihydroxy-2-naphthoate: step 2/2. It participates in cofactor biosynthesis; ubiquinone biosynthesis. Methyltransferase required for the conversion of demethylmenaquinol (DMKH2) to menaquinol (MKH2) and the conversion of 2-polyprenyl-6-methoxy-1,4-benzoquinol (DDMQH2) to 2-polyprenyl-3-methyl-6-methoxy-1,4-benzoquinol (DMQH2). In Paraburkholderia phytofirmans (strain DSM 17436 / LMG 22146 / PsJN) (Burkholderia phytofirmans), this protein is Ubiquinone/menaquinone biosynthesis C-methyltransferase UbiE.